A 326-amino-acid chain; its full sequence is MPGPTQTLSPNGENNNDIIQDNGTIIPFRKHTVRGERSYSWGMAVNVYSTSITQETMSRHDIIAWVNDIVSLNYTKVEQLCSGAAYCQFMDMLFPGCISLKKVKFQAKLEHEYIHNFKLLQASFKRMNVDKVIPVEKLVKGRFQDNLDFIQWFKKFYDANYDGKEYDPVEARQGQDAIPPPDPGEQIFNLPKKSHHANSPTAGAAKSSPAAKPGSTPSRPSSAKRASSSGSASRSDKDLETQVIQLNEQVHSLKLALEGVEKERDFYFGKLREIELLCQEHGQENDDLVQRLMEVLYASDEQEGQTEEPEVEEQTHDQQPQQQEEY.

Residue S9 is modified to Phosphoserine. Residues 56-158 (TMSRHDIIAW…FIQWFKKFYD (103 aa)) form the Calponin-homology (CH) domain. Y166 is modified (phosphotyrosine). 2 disordered regions span residues 170-239 (EARQ…DKDL) and 297-326 (YASDEQEGQTEEPEVEEQTHDQQPQQQEEY). The tract at residues 186 to 326 (QIFNLPKKSH…DQQPQQQEEY (141 aa)) is DCTN1-binding. The segment covering 199 to 233 (SPTAGAAKSSPAAKPGSTPSRPSSAKRASSSGSAS) has biased composition (low complexity). Phosphoserine occurs at positions 218 and 235. The region spanning 235 to 305 (SDKDLETQVI…LYASDEQEGQ (71 aa)) is the EB1 C-terminal domain. Residues 258-301 (EGVEKERDFYFGKLREIELLCQEHGQENDDLVQRLMEVLYASDE) are APC-binding. The span at 300–312 (DEQEGQTEEPEVE) shows a compositional bias: acidic residues. Low complexity predominate over residues 317 to 326 (DQQPQQQEEY).

It belongs to the MAPRE family. In terms of assembly, interacts with DCTN1. Interacts with APC (via C-terminal). Interacts with monomeric and polymerized tubulin. Interacts with SLAIN1. Interacts (via the N-terminal region) with BAG1. Interacts with ASB14. Interacts with HAX1; this interaction is essential for epidermal cell migration. Phosphorylated at Ser-235 by CK2 leading to enhanced cell adhesion. Phosphorylated by CDK1 and AURKB during mitosis reduces the binding affinity of MAPRE2 for microtubules. In terms of processing, ubiquitinated in an ASB14-dependent manner; leading to proteasomal degradation.

The protein localises to the cytoplasm. It localises to the cytoskeleton. Functionally, adapter protein that is involved in microtubule polymerization, and spindle function by stabilizing microtubules and anchoring them at centrosomes. Therefore, ensures mitotic progression and genome stability. Acts as a central regulator of microtubule reorganization in apico-basal epithelial differentiation. Plays a role during oocyte meiosis by regulating microtubule dynamics. Participates in neurite growth by interacting with plexin B3/PLXNB3 and microtubule reorganization during apico-basal epithelial differentiation. Also plays an essential role for cell migration and focal adhesion dynamics. Mechanistically, recruits HAX1 to microtubules in order to regulate focal adhesion dynamics. In Rattus norvegicus (Rat), this protein is Microtubule-associated protein RP/EB family member 2 (Mapre2).